The sequence spans 650 residues: Chaperone protein HtpG (650 aa).

The segment at 1 to 344 (MSKHTHSFQA…SADLPLNVSR (344 aa)) is a; substrate-binding. The segment at 345 to 582 (ELLQESRDVR…DGGMSTQLAR (238 aa)) is b. Residues 583–650 (LLKQAGQSAP…YVKRVNALLA (68 aa)) are c.

Belongs to the heat shock protein 90 family. Homodimer.

It is found in the cytoplasm. Its function is as follows. Molecular chaperone. Has ATPase activity. The protein is Chaperone protein HtpG of Acidovorax sp. (strain JS42).